A 1459-amino-acid chain; its full sequence is Endogenous retrovirus group K member 7 Pol protein (1459 aa).

Positions 57-245 (LEKGHIEPSF…TPFHYLGMQI (189 aa)) constitute a Reverse transcriptase domain. Residues 161–164 (LPQG) carry the LPQG motif. Positions 195-198 (YIDD) match the YXDD motif. Residues 460–590 (LENALTVFTD…ADLLVSSALI (131 aa)) form the RNase H type-1 domain. Asp-469, Glu-497, Asp-517, and Asp-582 together coordinate Mg(2+). Residues 587–628 (SALIKAQELHALTHVNAAGLKNKFDVTWKQAKDIVQHCTQCQ) form an Integrase-type zinc finger. 4 residues coordinate Zn(2+): His-596, His-600, Cys-624, and Cys-627. The Integrase catalytic domain occupies 642–803 (RGLCPNALWQ…TSAEQHLTGK (162 aa)). Positions 811–859 (KLIWWKDNKNKTWEIGKVITWGRGFACVSPGENQLPVWIPTRHLKFYNE) form a DNA-binding region, integrase-type.

The protein belongs to the beta type-B retroviral polymerase family. HERV class-II K(HML-2) pol subfamily.

It catalyses the reaction DNA(n) + a 2'-deoxyribonucleoside 5'-triphosphate = DNA(n+1) + diphosphate. The catalysed reaction is Endonucleolytic cleavage to 5'-phosphomonoester.. Its function is as follows. Early post-infection, the reverse transcriptase converts the viral RNA genome into double-stranded viral DNA. The RNase H domain of the reverse transcriptase performs two functions. It degrades the RNA template and specifically removes the RNA primer from the RNA/DNA hybrid. Following nuclear import, the integrase catalyzes the insertion of the linear, double-stranded viral DNA into the host cell chromosome. Endogenous Pol proteins may have kept, lost or modified their original function during evolution. In Homo sapiens (Human), this protein is Endogenous retrovirus group K member 7 Pol protein (ERVK-7).